The chain runs to 280 residues: 2-dehydro-3-deoxyphosphooctonate aldolase (280 aa).

The protein belongs to the KdsA family.

It localises to the cytoplasm. It carries out the reaction D-arabinose 5-phosphate + phosphoenolpyruvate + H2O = 3-deoxy-alpha-D-manno-2-octulosonate-8-phosphate + phosphate. It participates in carbohydrate biosynthesis; 3-deoxy-D-manno-octulosonate biosynthesis; 3-deoxy-D-manno-octulosonate from D-ribulose 5-phosphate: step 2/3. The protein operates within bacterial outer membrane biogenesis; lipopolysaccharide biosynthesis. The chain is 2-dehydro-3-deoxyphosphooctonate aldolase from Nitrosococcus oceani (strain ATCC 19707 / BCRC 17464 / JCM 30415 / NCIMB 11848 / C-107).